We begin with the raw amino-acid sequence, 489 residues long: Glutamyl-tRNA(Gln) amidotransferase subunit A (489 aa).

Residues Lys80 and Ser160 each act as charge relay system in the active site. The Acyl-ester intermediate role is filled by Ser184.

It belongs to the amidase family. GatA subfamily. In terms of assembly, heterotrimer of A, B and C subunits.

The catalysed reaction is L-glutamyl-tRNA(Gln) + L-glutamine + ATP + H2O = L-glutaminyl-tRNA(Gln) + L-glutamate + ADP + phosphate + H(+). Functionally, allows the formation of correctly charged Gln-tRNA(Gln) through the transamidation of misacylated Glu-tRNA(Gln) in organisms which lack glutaminyl-tRNA synthetase. The reaction takes place in the presence of glutamine and ATP through an activated gamma-phospho-Glu-tRNA(Gln). The sequence is that of Glutamyl-tRNA(Gln) amidotransferase subunit A from Wolbachia sp. subsp. Brugia malayi (strain TRS).